Consider the following 499-residue polypeptide: Glycerol kinase (499 aa).

Position 13 (Thr13) interacts with ADP. ATP-binding residues include Thr13, Thr14, and Ser15. Thr13 provides a ligand contact to sn-glycerol 3-phosphate. Arg17 contacts ADP. Residues Arg83, Glu84, Tyr135, and Asp244 each contribute to the sn-glycerol 3-phosphate site. Positions 83, 84, 135, 244, and 245 each coordinate glycerol. ADP contacts are provided by Thr266 and Gly309. The ATP site is built by Thr266, Gly309, Gln313, and Gly410. Residues Gly410 and Asn414 each contribute to the ADP site.

It belongs to the FGGY kinase family.

The catalysed reaction is glycerol + ATP = sn-glycerol 3-phosphate + ADP + H(+). Its pathway is polyol metabolism; glycerol degradation via glycerol kinase pathway; sn-glycerol 3-phosphate from glycerol: step 1/1. With respect to regulation, inhibited by fructose 1,6-bisphosphate (FBP). Functionally, key enzyme in the regulation of glycerol uptake and metabolism. Catalyzes the phosphorylation of glycerol to yield sn-glycerol 3-phosphate. This Paraburkholderia phymatum (strain DSM 17167 / CIP 108236 / LMG 21445 / STM815) (Burkholderia phymatum) protein is Glycerol kinase.